A 332-amino-acid polypeptide reads, in one-letter code: Glycerol-3-phosphate dehydrogenase [NAD(P)+] (332 aa).

Positions 11, 30, and 108 each coordinate NADPH. Sn-glycerol 3-phosphate-binding residues include Lys-108, Gly-137, and Ser-139. An NADPH-binding site is contributed by Ala-141. Sn-glycerol 3-phosphate is bound by residues Lys-192, Asp-245, Ser-255, Arg-256, and Asn-257. The active-site Proton acceptor is the Lys-192. NADPH is bound at residue Arg-256. Residues Val-280 and Glu-282 each contribute to the NADPH site.

Belongs to the NAD-dependent glycerol-3-phosphate dehydrogenase family.

The protein resides in the cytoplasm. The catalysed reaction is sn-glycerol 3-phosphate + NAD(+) = dihydroxyacetone phosphate + NADH + H(+). The enzyme catalyses sn-glycerol 3-phosphate + NADP(+) = dihydroxyacetone phosphate + NADPH + H(+). Its pathway is membrane lipid metabolism; glycerophospholipid metabolism. In terms of biological role, catalyzes the reduction of the glycolytic intermediate dihydroxyacetone phosphate (DHAP) to sn-glycerol 3-phosphate (G3P), the key precursor for phospholipid synthesis. The polypeptide is Glycerol-3-phosphate dehydrogenase [NAD(P)+] (Burkholderia vietnamiensis (strain G4 / LMG 22486) (Burkholderia cepacia (strain R1808))).